A 265-amino-acid polypeptide reads, in one-letter code: tRNA pseudouridine synthase A (265 aa).

Asp-53 serves as the catalytic Nucleophile. Tyr-111 is a binding site for substrate.

This sequence belongs to the tRNA pseudouridine synthase TruA family. Homodimer.

The catalysed reaction is uridine(38/39/40) in tRNA = pseudouridine(38/39/40) in tRNA. In terms of biological role, formation of pseudouridine at positions 38, 39 and 40 in the anticodon stem and loop of transfer RNAs. This is tRNA pseudouridine synthase A from Acinetobacter baumannii (strain SDF).